The sequence spans 1525 residues: Multidrug resistance-associated protein 1 (1525 aa).

Residues 1–33 (MGIESLCSADASEPFWDWNLTWHTENPDFTQCF) are Extracellular-facing. Residues 34 to 54 (QNTVLVWVPCIYLWVCFPAYF) traverse the membrane as a helical segment. The Cytoplasmic portion of the chain corresponds to 55 to 74 (LYLRSHDRGYIQMSILNKAK). Residues 75-95 (TALGLILWIVCWADLFYSFWE) form a helical membrane-spanning segment. The Extracellular segment spans residues 96-100 (RSQNI). Residues 101–121 (FRAPFFLISPTVLGITMLLAT) form a helical membrane-spanning segment. Over 122–133 (FLIQHERLKGVQ) the chain is Cytoplasmic. The helical transmembrane segment at 134–154 (SSGVMMIFWLISLLCATVIFR) threads the bilayer. Topologically, residues 155–172 (SKIMLALNTDTEVDAFRY) are extracellular. A helical transmembrane segment spans residues 173–193 (VTFCTYFILLLVQLILSCFPE). The Cytoplasmic portion of the chain corresponds to 194–315 (KPPLFSEAVN…RSSEASLSKV (122 aa)). A helical membrane pass occupies residues 316–336 (LYKTFGPYFLMSFLFKAAHDL). The ABC transmembrane type-1 1 domain occupies 324–607 (FLMSFLFKAA…LPMVISSIVE (284 aa)). The Extracellular segment spans residues 337 to 362 (LMFTGPEILKLLINFVNNKSAPNWQG). Residues 363-383 (YFYTGLLFVCACLQTLILHQY) traverse the membrane as a helical segment. Residues 384–439 (FHICFVTGMRLKTAIVGVIYRKALVITNSARKTSTVGEIVNLMSVDAQRFMDLATY) are Cytoplasmic-facing. The chain crosses the membrane as a helical span at residues 440 to 460 (INMIWSAPLQVILALYLLWRN). Residues 461–463 (LGP) lie on the Extracellular side of the membrane. The helical transmembrane segment at 464-484 (SVLAGVAVMILLVPINAVMAM) threads the bilayer. The Cytoplasmic segment spans residues 485-546 (KTKTYQVAQM…VLKKSAYLAA (62 aa)). The chain crosses the membrane as a helical span at residues 547-567 (MGTFTWVCAPFLVALSTFAVY). The Extracellular portion of the chain corresponds to 568–589 (VKVNKNNILDAQKAFVSLALFN). The helical transmembrane segment at 590 to 610 (ILRFPLNILPMVISSIVEASV) threads the bilayer. At 611–961 (SLKRLRVFLS…VKATVYWEYM (351 aa)) the chain is on the cytoplasmic side. Positions 641–865 (IVVKNATFSW…DGAFAEFLRT (225 aa)) constitute an ABC transporter 1 domain. Position 675–682 (675–682 (GQVGCGKS)) interacts with ATP. 2 stretches are compositionally biased toward polar residues: residues 871-882 (QSMESSDASSPS) and 908-928 (SNSS…STAE). 2 disordered regions span residues 871–891 (QSME…PVEN) and 908–930 (SNSS…AELQ). A helical membrane pass occupies residues 962-982 (KAIGLYISFLSVFLFMCNHIA). One can recognise an ABC transmembrane type-1 2 domain in the interval 969 to 1250 (SFLSVFLFMC…LVRMTSDLET (282 aa)). The Extracellular portion of the chain corresponds to 983 to 1019 (SLASNYWLSLWTDDPVVNGTQQYTNVRLGVYGALGIS). The helical transmembrane segment at 1020–1040 (QGIAVFGYSMAVSIGGIFASR) threads the bilayer. At 1041 to 1083 (HLHLDLLHNVLRSPMSFFERTPSGNLVSRFSKEIDTIDSTIPP) the chain is on the cytoplasmic side. A helical transmembrane segment spans residues 1084-1104 (IIKMFMGSTFNVIGACIIILL). Position 1105 (A1105) is a topological domain, extracellular. Residues 1106–1126 (TPIAAVVIPPLGLVYLLVQRF) traverse the membrane as a helical segment. Over 1127 to 1197 (YVATSRQLKR…VANRWLAVRL (71 aa)) the chain is Cytoplasmic. The chain crosses the membrane as a helical span at residues 1198–1218 (EFVGNCIVLFAALFAVIARNK). At 1219-1220 (LS) the chain is on the extracellular side. Residues 1221–1241 (PGLIGLSVSYSLQITAYLNWL) form a helical membrane-spanning segment. At 1242–1525 (VRMTSDLETN…YSMAKDSGLA (284 aa)) the chain is on the cytoplasmic side. Residues 1289 to 1521 (FRGFGLRYRE…KGLFYSMAKD (233 aa)) enclose the ABC transporter 2 domain. 1321-1328 (GRTGAGKS) contacts ATP.

This sequence belongs to the ABC transporter superfamily. ABCC family. Conjugate transporter (TC 3.A.1.208) subfamily.

It is found in the cell membrane. The catalysed reaction is ATP + H2O + xenobioticSide 1 = ADP + phosphate + xenobioticSide 2.. It catalyses the reaction an S-substituted glutathione(in) + ATP + H2O = an S-substituted glutathione(out) + ADP + phosphate + H(+). It carries out the reaction sphing-4-enine 1-phosphate(in) + ATP + H2O = sphing-4-enine 1-phosphate(out) + ADP + phosphate + H(+). The enzyme catalyses leukotriene C4(in) + ATP + H2O = leukotriene C4(out) + ADP + phosphate + H(+). The catalysed reaction is 17beta-estradiol 17-O-(beta-D-glucuronate)(in) + ATP + H2O = 17beta-estradiol 17-O-(beta-D-glucuronate)(out) + ADP + phosphate + H(+). It catalyses the reaction 2',3'-cGAMP(in) + ATP + H2O = 2',3'-cGAMP(out) + ADP + phosphate + H(+). Its function is as follows. Mediates export of organic anions and drugs from the cytoplasm. Mediates ATP-dependent transport of glutathione and glutathione conjugates, leukotriene C4, estradiol-17-beta-o-glucuronide and other xenobiotics. Hydrolyzes ATP with low efficiency. Mediates ATP-dependent, GSH-independent cyclic GMP-AMP (cGAMP) export. Thus, by limiting intracellular cGAMP concentrations negatively regulates the cGAS-STING pathway. This is Multidrug resistance-associated protein 1 from Gallus gallus (Chicken).